We begin with the raw amino-acid sequence, 150 residues long: FAD synthase (150 aa).

ATP is bound by residues 11-12, 16-19, Asp96, and Tyr124; these read TF and HPGH.

The protein belongs to the archaeal FAD synthase family. In terms of assembly, homodimer. Requires a divalent metal cation as cofactor.

The catalysed reaction is FMN + ATP + H(+) = FAD + diphosphate. The protein operates within cofactor biosynthesis; FAD biosynthesis; FAD from FMN: step 1/1. Its function is as follows. Catalyzes the transfer of the AMP portion of ATP to flavin mononucleotide (FMN) to produce flavin adenine dinucleotide (FAD) coenzyme. This is FAD synthase from Methanococcus maripaludis (strain DSM 14266 / JCM 13030 / NBRC 101832 / S2 / LL).